The primary structure comprises 123 residues: Small ribosomal subunit protein uS12 (123 aa).

At D89 the chain carries 3-methylthioaspartic acid. The interval 100–123 is disordered; sequence GSLDTSGVKGRNQGRSKYGTKKPK. Positions 111–123 are enriched in basic residues; sequence NQGRSKYGTKKPK.

It belongs to the universal ribosomal protein uS12 family. As to quaternary structure, part of the 30S ribosomal subunit. Contacts proteins S8 and S17. May interact with IF1 in the 30S initiation complex.

Its function is as follows. With S4 and S5 plays an important role in translational accuracy. Functionally, interacts with and stabilizes bases of the 16S rRNA that are involved in tRNA selection in the A site and with the mRNA backbone. Located at the interface of the 30S and 50S subunits, it traverses the body of the 30S subunit contacting proteins on the other side and probably holding the rRNA structure together. The combined cluster of proteins S8, S12 and S17 appears to hold together the shoulder and platform of the 30S subunit. The chain is Small ribosomal subunit protein uS12 from Pseudomonas syringae pv. syringae (strain B728a).